Reading from the N-terminus, the 1207-residue chain is DNA-directed RNA polymerase, mitochondrial (1207 aa).

The N-terminal 41 residues, 1–41 (MSALRWTRSAAGLGRVLRSPGPHRPPSEEGTFGGFCSSRRS), are a transit peptide targeting the mitochondrion. Disordered regions lie at residues 1–48 (MSAL…SPRE) and 82–103 (KKVQ…KLEA). PPR repeat units follow at residues 232-266 (TLHM…GLSP) and 267-302 (DLCS…GFQP). The tract at residues 702–724 (VPPPRSEAPRPARYQLPPGSTPV) is disordered. The mediates interaction with TEFM stretch occupies residues 773-1207 (FRGRTYPCPP…QVIRSTYFFS (435 aa)). Catalysis depends on residues D893, K962, and D1121.

This sequence belongs to the phage and mitochondrial RNA polymerase family. Homodimer. Component of the mitochondrial transcription initiation complex, composed at least of TFB2M, TFAM and POLRMT. In this complex TFAM recruits POLRMT to the promoter whereas TFB2M induces structural changes in POLRMT to enable promoter opening and trapping of the DNA non-template strand. Upon metabolic stress, forms a complex composed of FOXO3, SIRT3 and mitochondrial RNA polymerase POLRMT; the complex is recruited to mtDNA in a SIRT3-dependent manner. Also forms a complex composed of FOXO3, SIRT3, TFAM and POLRMT. Interacts with TFB1M and TFB2M, leading to the stimulation of transcription. Interacts with TEFM. Interacts with MTRES1.

It is found in the mitochondrion. The enzyme catalyses RNA(n) + a ribonucleoside 5'-triphosphate = RNA(n+1) + diphosphate. In terms of biological role, DNA-dependent RNA polymerase catalyzes the transcription of mitochondrial DNA into RNA using the four ribonucleoside triphosphates as substrates. Component of the mitochondrial transcription initiation complex, composed at least of TFB2M, TFAM and POLRMT that is required for basal transcription of mitochondrial DNA. In this complex, TFAM recruits POLRMT to a specific promoter whereas TFB2M induces structural changes in POLRMT to enable promoter opening and trapping of the DNA non-template strand. Has DNA primase activity. Catalyzes the synthesis of short RNA primers that are necessary for the initiation of lagging-strand DNA synthesis from the origin of light-strand DNA replication (OriL). In Mus musculus (Mouse), this protein is DNA-directed RNA polymerase, mitochondrial.